The following is a 248-amino-acid chain: Probable septum site-determining protein MinC (248 aa).

Residues 94–126 form a disordered region; the sequence is GMPPAMRGGQPAADFEAPAGEPQANPGAPEPQI.

The protein belongs to the MinC family. In terms of assembly, interacts with MinD and FtsZ.

Cell division inhibitor that blocks the formation of polar Z ring septums. Rapidly oscillates between the poles of the cell to destabilize FtsZ filaments that have formed before they mature into polar Z rings. Prevents FtsZ polymerization. The protein is Probable septum site-determining protein MinC of Brucella suis biovar 1 (strain 1330).